The chain runs to 468 residues: uncharacterized protein (468 aa).

Residues 1–22 (MVKRSSHRQVVLDEDDEENYNN) are disordered. The segment at 85–123 (CPICTEALQRPFTTHCGHTYCYECLLNWLKESKSCPTCR) adopts an RING-type zinc-finger fold. A compositionally biased stretch (low complexity) spans 386–402 (DSLNSSSNNSPSHNNIH). A disordered region spans residues 386-468 (DSLNSSSNNS…TIQLDSDEES (83 aa)). Residues 417 to 434 (IVTNGTGLRSSQSSSQNR) are compositionally biased toward polar residues.

The protein resides in the nucleus. This is an uncharacterized protein from Schizosaccharomyces pombe (strain 972 / ATCC 24843) (Fission yeast).